The following is a 346-amino-acid chain: Sensor protein kinase GraS (346 aa).

2 helical membrane passes run 15–35 (MNWI…SLID) and 43–63 (LFYI…LTYF). Residues 126 to 332 (EFVHDIKTPV…TVRLIFPLQN (207 aa)) enclose the Histidine kinase domain.

Interacts with GraX.

It is found in the cell membrane. The enzyme catalyses ATP + protein L-histidine = ADP + protein N-phospho-L-histidine.. In terms of biological role, member of the two-component regulatory system GraR/GraS involved in resistance against cationic antimicrobial peptides (CAMPs). Functions as a sensor protein kinase which phosphorylates GraR through the auxiliary protein GraX. In turn, GraR up-regulates many genes such as adhesins, exoproteins, transporters, toxins, and proteins involved in cell wall synthesis. Down-regulates the expression of many genes involved in RNA and amino acid synthesis or glycolysis. This chain is Sensor protein kinase GraS (graS), found in Staphylococcus aureus (strain bovine RF122 / ET3-1).